The following is a 257-amino-acid chain: Cytochrome c oxidase subunit 3 (257 aa).

The next 6 membrane-spanning stretches (helical) occupy residues Pro-15–Phe-35, Gly-82–Phe-102, Phe-124–Ala-144, Cys-156–Leu-176, Phe-194–Ile-214, and Ala-235–Trp-255.

This sequence belongs to the cytochrome c oxidase subunit 3 family. As to quaternary structure, component of the cytochrome c oxidase (complex IV, CIV), a multisubunit enzyme composed of a catalytic core of 3 subunits and several supernumerary subunits. The complex exists as a monomer or a dimer and forms supercomplexes (SCs) in the inner mitochondrial membrane with ubiquinol-cytochrome c oxidoreductase (cytochrome b-c1 complex, complex III, CIII).

The protein localises to the mitochondrion inner membrane. It carries out the reaction 4 Fe(II)-[cytochrome c] + O2 + 8 H(+)(in) = 4 Fe(III)-[cytochrome c] + 2 H2O + 4 H(+)(out). Component of the cytochrome c oxidase, the last enzyme in the mitochondrial electron transport chain which drives oxidative phosphorylation. The respiratory chain contains 3 multisubunit complexes succinate dehydrogenase (complex II, CII), ubiquinol-cytochrome c oxidoreductase (cytochrome b-c1 complex, complex III, CIII) and cytochrome c oxidase (complex IV, CIV), that cooperate to transfer electrons derived from NADH and succinate to molecular oxygen, creating an electrochemical gradient over the inner membrane that drives transmembrane transport and the ATP synthase. Cytochrome c oxidase is the component of the respiratory chain that catalyzes the reduction of oxygen to water. Electrons originating from reduced cytochrome c in the intermembrane space (IMS) are transferred via the dinuclear copper A center (CU(A)) of subunit 2 and heme A of subunit 1 to the active site in subunit 1, a binuclear center (BNC) formed by heme A3 and copper B (CU(B)). The BNC reduces molecular oxygen to 2 water molecules using 4 electrons from cytochrome c in the IMS and 4 protons from the mitochondrial matrix. In Artemia franciscana (Brine shrimp), this protein is Cytochrome c oxidase subunit 3 (COIII).